The primary structure comprises 876 residues: Vacuolar protein sorting-associated protein 39 homolog (876 aa).

Positions 14–310 (GVQIESIAAY…KFLVHADKGT (297 aa)) constitute a CNH domain. Residues 578–741 (ELIEVESLPR…ILIPPTQPLY (164 aa)) form a CHCR repeat.

It belongs to the VAM6/VPS39 family. In terms of assembly, part of the homotypic fusion and vacuole protein sorting (HOPS) complex, composed of Vps16A, car/Vps33A, dor/Vps18, Vps39, Vps11 and lt/Vps41. Interacts with Rab2 (GTP-bound form); the interaction is probably direct.

Its subcellular location is the cytoplasm. The protein localises to the lysosome membrane. The protein resides in the late endosome membrane. It localises to the late endosome. It is found in the lysosome. Functionally, part of the homotypic fusion and vacuole protein sorting (HOPS) tethering complex involved in endo-lysosomal vesicle trafficking and lysosome biogenesis. The HOPS complex facilitates docking and fusion of lysosomes with late endosomes and several other types of vesicles. The HOPS complex is also involved in autophagy and crinophagy (the elimination of unused secretory granules through their fusion with lysosomes). The HOPS complex mediates autophagocitic flux, probably by binding autophagosome-associated Syx17/syntaxin 17, promoting assembly of the trans-SNARE complex and instigating autophagosome-lysosome fusion. Independent of Syx17/syntaxin 17, HOPS is involved in biosynthetic transport to lysosomes and lysosome-related organelles such as eye-pigment granules. Required for autophagocytosis-dependent remodeling of myofibrils and transverse-tubules (T-tubules) during metamorphosis. This Drosophila melanogaster (Fruit fly) protein is Vacuolar protein sorting-associated protein 39 homolog.